A 53-amino-acid chain; its full sequence is Large ribosomal subunit protein eL40 (53 aa).

This sequence belongs to the eukaryotic ribosomal protein eL40 family.

The sequence is that of Large ribosomal subunit protein eL40 from Staphylothermus marinus (strain ATCC 43588 / DSM 3639 / JCM 9404 / F1).